Here is a 184-residue protein sequence, read N- to C-terminus: Type-1 fimbrial protein, A chain (184 aa).

A signal peptide spans methionine 1–alanine 22. The cysteines at positions 46 and 86 are disulfide-linked.

Belongs to the fimbrial protein family.

Its subcellular location is the fimbrium. Functionally, fimbriae (also called pili), polar filaments radiating from the surface of the bacterium to a length of 0.5-1.5 micrometers and numbering 100-300 per cell, enable bacteria to colonize the epithelium of specific host organs. The protein is Type-1 fimbrial protein, A chain (fimA) of Salmonella typhi.